Here is a 59-residue protein sequence, read N- to C-terminus: Large ribosomal subunit protein uL30 (59 aa).

The protein belongs to the universal ribosomal protein uL30 family. Part of the 50S ribosomal subunit.

The sequence is that of Large ribosomal subunit protein uL30 from Staphylococcus aureus (strain JH1).